The following is a 1941-amino-acid chain: Xin actin-binding repeat-containing protein 1 (1941 aa).

The segment at 1 to 41 (MAEPQKSSKVAIKKMEDDLPPPPIPDSIQVIAPASQDPNPL) is disordered. Xin repeat units follow at residues 108–123 (GEVQ…WALD), 143–158 (GDVK…QSVN), 176–191 (GDVH…QPLD), 215–230 (GDVK…QSLD), 255–270 (GDVK…EPLC), 293–308 (NAVR…QPLD), 331–346 (PDVS…QPLD), 368–383 (ADVT…QALD), 402–417 (GDVK…QPME), 439–454 (GDVK…CPLG), 475–490 (GDVK…LPLD), 510–525 (GNVK…TPLY), 548–563 (GDVK…RPLD), 586–601 (GDVR…QPMD), 624–639 (GDVK…QPMH), 658–673 (ADVK…QPLD), 697–712 (VDVK…EPLG), 736–751 (GEVS…KPLD), 769–784 (GSVH…YPMD), 805–820 (GDVG…YSLD), 842–857 (ANVK…QPLY), 880–895 (GDVK…KPLD), 917–932 (GDVQ…EPLD), 951–966 (GDVQ…QQVG), 982–997 (GDVR…QPVD), 1020–1035 (GDVK…QPMD), and 1055–1070 (ADVK…TPLD). Residues 1514-1565 (ASKQETKTLQSTIHQQESASTMRENTSTAIRTSTTRVQEASRTHTSVSQKSI) are compositionally biased toward polar residues. Disordered regions lie at residues 1514 to 1568 (ASKQ…IASH), 1715 to 1856 (ASGS…PPPA), and 1914 to 1941 (YKAR…GEVG). Residues 1820-1833 (SASTNNSTNRSTKS) are compositionally biased toward low complexity. Pro residues predominate over residues 1834–1843 (VPPPVPPKPP).

It belongs to the Xin family. Expressed at intercalated disks in the heart (at protein level).

It localises to the cell junction. It is found in the adherens junction. The protein localises to the desmosome. In terms of biological role, involved in cardiac morphogenesis, including heart midline formation, cardiac tubule looping, myocardial formation and maintenance of heart beat speed and rhythm. May protect actin filaments from depolymerization. May play a role in development of normal skeletal muscle morphology, muscle fiber type composition and regulation of muscle satellite cell activation and survival. The protein is Xin actin-binding repeat-containing protein 1 of Gallus gallus (Chicken).